Consider the following 409-residue polypeptide: Adenosine receptor A2a (409 aa).

Over 1 to 4 (MSSS) the chain is Extracellular. A helical membrane pass occupies residues 5 to 29 (VYITVELVIAVLAILGNVLVCWAVW). Residues 30 to 39 (INSNLQNVTN) are Cytoplasmic-facing. The chain crosses the membrane as a helical span at residues 40-63 (YFVVSLAAADIAVGVLAIPFAITI). At 64–74 (STGFCAACHGC) the chain is on the extracellular side. 3 disulfide bridges follow: Cys68-Cys156, Cys71-Cys143, and Cys74-Cys163. A helical transmembrane segment spans residues 75 to 97 (LFFACFVLVLTQSSIFSLLTITI). Over 98 to 117 (DRYIAIRIPLRYNGLVTCTR) the chain is Cytoplasmic. A helical membrane pass occupies residues 118-140 (AKGIIAICWVLSFAIGLTPMLGW). Residues 141–170 (NNCSQPKGDKNHSESCDEGQVTCLFEDVVP) are Extracellular-facing. N-linked (GlcNAc...) asparagine glycosylation is found at Asn142 and Asn151. Residue Glu166 participates in adenosine binding. Residues 171-195 (MNYMVYYNFFAFVLVPLLLMLGIYL) form a helical membrane-spanning segment. Residues 196–231 (RIFLAARRQLKQMESQPLPGERTRSTLQKEVHPAKS) are Cytoplasmic-facing. A helical membrane pass occupies residues 232 to 255 (LAIIVGLFALCCLPLNIINCFTFF). Position 250 (Asn250) interacts with adenosine. The cysteines at positions 256 and 259 are disulfide-linked. At 256 to 263 (CPECDHAP) the chain is on the extracellular side. The helical transmembrane segment at 264–287 (PWLMYLTIILSHGNSVVNPLIYAY) threads the bilayer. Residues Ser274 and His275 each coordinate adenosine. The Cytoplasmic portion of the chain corresponds to 288 to 409 (RIREFRQTFR…PPAHGGAGVS (122 aa)). Disordered regions lie at residues 316–336 (TSARASAAHSPEGEQVSLRLN) and 369–409 (QRSH…AGVS).

The protein belongs to the G-protein coupled receptor 1 family. Interacts (via cytoplasmic C-terminal domain) with USP4; the interaction is direct. May interact with DRD4. Interacts with NECAB2. Interacts (via cytoplasmic C-terminal domain) with GAS2L2; interaction enhances receptor-mediated adenylyl cyclase activity. Ubiquitinated. Deubiquitinated by USP4; leading to stabilization and expression at the cell surface.

Its subcellular location is the cell membrane. In terms of biological role, receptor for adenosine. The activity of this receptor is mediated by G proteins which activate adenylyl cyclase. The sequence is that of Adenosine receptor A2a (ADORA2A) from Cavia porcellus (Guinea pig).